Reading from the N-terminus, the 178-residue chain is MAELTTLARPYAKAAFEHAQAHQQLANWSAMLGLAAAVSQDDTMQRLLKAPRLTSAEKAATFIDVCGDKFNAQAQNFIRVAAENDRLLLLPEIAALFDLYKAEQEKSVDVEVTSAFALNQEQQDKLAKVLSARLGQEVRLHASEDANLIGGVVIRAGDLVIDGSVRGKIAKLAEALKS.

The protein belongs to the ATPase delta chain family. In terms of assembly, F-type ATPases have 2 components, F(1) - the catalytic core - and F(0) - the membrane proton channel. F(1) has five subunits: alpha(3), beta(3), gamma(1), delta(1), epsilon(1). F(0) has three main subunits: a(1), b(2) and c(10-14). The alpha and beta chains form an alternating ring which encloses part of the gamma chain. F(1) is attached to F(0) by a central stalk formed by the gamma and epsilon chains, while a peripheral stalk is formed by the delta and b chains.

It localises to the cell inner membrane. F(1)F(0) ATP synthase produces ATP from ADP in the presence of a proton or sodium gradient. F-type ATPases consist of two structural domains, F(1) containing the extramembraneous catalytic core and F(0) containing the membrane proton channel, linked together by a central stalk and a peripheral stalk. During catalysis, ATP synthesis in the catalytic domain of F(1) is coupled via a rotary mechanism of the central stalk subunits to proton translocation. In terms of biological role, this protein is part of the stalk that links CF(0) to CF(1). It either transmits conformational changes from CF(0) to CF(1) or is implicated in proton conduction. In Pseudomonas putida (strain W619), this protein is ATP synthase subunit delta.